A 440-amino-acid polypeptide reads, in one-letter code: Lipopolysaccharide-processing protein LpsZ (440 aa).

This sequence to E.coli capsule polysaccharide export protein KpsC.

It localises to the cytoplasm. Functionally, involved in the invasion of nitrogen fixation nodules. May be involved in the biosynthesis of lipopolysaccharides as an enzyme or a regulatory protein. The protein is Lipopolysaccharide-processing protein LpsZ (lpsZ) of Rhizobium meliloti (Ensifer meliloti).